The sequence spans 281 residues: 2,3,4,5-tetrahydropyridine-2,6-dicarboxylate N-succinyltransferase (281 aa).

Substrate is bound by residues Arg-108 and Asp-145.

The protein belongs to the transferase hexapeptide repeat family. As to quaternary structure, homotrimer.

It localises to the cytoplasm. It catalyses the reaction (S)-2,3,4,5-tetrahydrodipicolinate + succinyl-CoA + H2O = (S)-2-succinylamino-6-oxoheptanedioate + CoA. The protein operates within amino-acid biosynthesis; L-lysine biosynthesis via DAP pathway; LL-2,6-diaminopimelate from (S)-tetrahydrodipicolinate (succinylase route): step 1/3. This chain is 2,3,4,5-tetrahydropyridine-2,6-dicarboxylate N-succinyltransferase, found in Methylobacterium nodulans (strain LMG 21967 / CNCM I-2342 / ORS 2060).